The primary structure comprises 211 residues: SOSS complex subunit B2 (211 aa).

A DNA-binding region (OB) is located at residues 27–97; the sequence is IVLEIGRVTK…TLYTGRGGDL (71 aa). The interval 125–211 is disordered; that stretch reads NQQNKTSKEQ…GRDPRRASKR (87 aa). Positions 136-157 are enriched in polar residues; that stretch reads GNSPPNQNAGNGTVPVFSNNNA. Over residues 179-195 the composition is skewed to pro residues; sequence NGPPPVTAGGTPAPPKP.

Belongs to the SOSS-B family. SOSS-B2 subfamily. As to quaternary structure, component of the SOSS complex, composed of soss-b (soss-b1/nabp2 or soss-b2/nabp1), soss-a/ints3 and soss-c/inip. SOSS complexes containing soss-b1/nabp2 are more abundant than complexes containing soss-b2/nabp1.

The protein localises to the nucleus. Component of the SOSS complex, a multiprotein complex that functions downstream of the MRN complex to promote DNA repair and G2/M checkpoint. In the SOSS complex, acts as a sensor of single-stranded DNA that binds to single-stranded DNA. The SOSS complex associates with DNA lesions and influences diverse endpoints in the cellular DNA damage response including cell-cycle checkpoint activation, recombinational repair and maintenance of genomic stability. Required for efficient homologous recombination-dependent repair of double-strand breaks (DSBs). The protein is SOSS complex subunit B2 (nabp1) of Danio rerio (Zebrafish).